Reading from the N-terminus, the 80-residue chain is Putative DNA-directed RNA polymerase subunit omega (80 aa).

This sequence belongs to the RNA polymerase subunit omega family.

It is found in the plastid. The protein localises to the chloroplast. The catalysed reaction is RNA(n) + a ribonucleoside 5'-triphosphate = RNA(n+1) + diphosphate. May be involved in RNA polymerase activity. The sequence is that of Putative DNA-directed RNA polymerase subunit omega from Gracilaria tenuistipitata var. liui (Red alga).